The primary structure comprises 940 residues: Serine/threonine-protein kinase PLK4 (940 aa).

One can recognise a Protein kinase domain in the interval 12–265; that stretch reads FKVLTLLGKG…LSAVLDHPFM (254 aa). ATP is bound by residues 18 to 26 and lysine 41; that span reads LGKGSFACV. Catalysis depends on aspartate 136, which acts as the Proton acceptor. 2 disordered regions span residues 262–353 and 409–529; these read HPFM…DLSR and RLFP…DAFV. The span at 273–305 shows a compositional bias: low complexity; the sequence is SKDSGSSNGGSIDSGIATISTASNATNNSSSSR. Composition is skewed to polar residues over residues 337–349, 440–465, and 494–519; these read FKSG…NSQD, NPAS…QPWF, and GTQT…QHNN. The 114-residue stretch at 563–676 folds into the Cryptic POLO box 1 (CPB1) domain; the sequence is CLKKSFPPLC…TKFVQLVKSK (114 aa). Residues 677–791 enclose the Cryptic POLO box 2 (CPB2) domain; it reads TPKVTLYTKF…GRRPVNPVPP (115 aa). One can recognise a POLO box domain in the interval 857 to 935; that stretch reads KVLKSIFVPN…LSSILGLLAN (79 aa).

This sequence belongs to the protein kinase superfamily. Ser/Thr protein kinase family. CDC5/Polo subfamily. Homodimer. Post-translationally, ubiquitinated; leading to its degradation by the proteasome.

The protein localises to the cytoplasm. It localises to the cytoskeleton. The protein resides in the microtubule organizing center. It is found in the centrosome. Its subcellular location is the centriole. The catalysed reaction is L-seryl-[protein] + ATP = O-phospho-L-seryl-[protein] + ADP + H(+). The enzyme catalyses L-threonyl-[protein] + ATP = O-phospho-L-threonyl-[protein] + ADP + H(+). Serine/threonine-protein kinase that plays a central role in centriole duplication. Able to trigger procentriole formation on the surface of the parental centriole cylinder, leading to the recruitment of centriole biogenesis proteins such as sass6, cpap, ccp110, cep135 and gamma-tubulin. When overexpressed, it is able to induce centrosome amplification through the simultaneous generation of multiple procentrioles adjoining each parental centriole during S phase. Its central role in centriole replication suggests a possible role in tumorigenesis, centrosome aberrations being frequently observed in tumors. Also involved in deuterosome-mediated centriole amplification in multiciliated that can generate more than 100 centrioles. This chain is Serine/threonine-protein kinase PLK4, found in Danio rerio (Zebrafish).